The sequence spans 77 residues: Acyl carrier protein (77 aa).

The 76-residue stretch at 2-77 folds into the Carrier domain; the sequence is ADVMERVTKI…DVVDYINNNQ (76 aa). Position 37 is an O-(pantetheine 4'-phosphoryl)serine (Ser37).

It belongs to the acyl carrier protein (ACP) family. In terms of processing, 4'-phosphopantetheine is transferred from CoA to a specific serine of apo-ACP by AcpS. This modification is essential for activity because fatty acids are bound in thioester linkage to the sulfhydryl of the prosthetic group.

It localises to the cytoplasm. Its pathway is lipid metabolism; fatty acid biosynthesis. In terms of biological role, carrier of the growing fatty acid chain in fatty acid biosynthesis. This chain is Acyl carrier protein, found in Shouchella clausii (strain KSM-K16) (Alkalihalobacillus clausii).